A 156-amino-acid polypeptide reads, in one-letter code: Small ribosomal subunit protein uS7c (156 aa).

The protein belongs to the universal ribosomal protein uS7 family. Part of the 30S ribosomal subunit.

The protein resides in the plastid. The protein localises to the chloroplast. One of the primary rRNA binding proteins, it binds directly to 16S rRNA where it nucleates assembly of the head domain of the 30S subunit. This is Small ribosomal subunit protein uS7c (rps7) from Chara vulgaris (Common stonewort).